The primary structure comprises 296 residues: Ribosomal RNA small subunit methyltransferase H (296 aa).

S-adenosyl-L-methionine-binding positions include 30–32, D49, F76, D97, and Q104; that span reads GGH.

It belongs to the methyltransferase superfamily. RsmH family.

It localises to the cytoplasm. The catalysed reaction is cytidine(1402) in 16S rRNA + S-adenosyl-L-methionine = N(4)-methylcytidine(1402) in 16S rRNA + S-adenosyl-L-homocysteine + H(+). In terms of biological role, specifically methylates the N4 position of cytidine in position 1402 (C1402) of 16S rRNA. The protein is Ribosomal RNA small subunit methyltransferase H of Mesomycoplasma hyopneumoniae (strain 232) (Mycoplasma hyopneumoniae).